The chain runs to 893 residues: Exocyst complex component 4 (893 aa).

The tract at residues 1–27 is disordered; sequence MNENGATPVAAARRHRPLPAERATSNS.

It belongs to the SEC8 family. In terms of assembly, the exocyst complex is composed of sec-3/exoc1, sec-5/exoc2, sec-6/exoc3, sec-8/exoc4, sec-10/exoc5, sec-15/exoc6, exo-70/exoc7 and exo-84/exoc8. As to expression, pseudocoelom.

Its function is as follows. Component of the exocyst complex involved in the docking of exocytic vesicles with fusion sites on the plasma membrane. This chain is Exocyst complex component 4 (sec-8), found in Caenorhabditis elegans.